The sequence spans 355 residues: Histidinol-phosphate aminotransferase (355 aa).

Lys222 bears the N6-(pyridoxal phosphate)lysine mark.

This sequence belongs to the class-II pyridoxal-phosphate-dependent aminotransferase family. Histidinol-phosphate aminotransferase subfamily. The cofactor is pyridoxal 5'-phosphate.

It catalyses the reaction L-histidinol phosphate + 2-oxoglutarate = 3-(imidazol-4-yl)-2-oxopropyl phosphate + L-glutamate. Its pathway is amino-acid biosynthesis; L-histidine biosynthesis; L-histidine from 5-phospho-alpha-D-ribose 1-diphosphate: step 7/9. This is Histidinol-phosphate aminotransferase from Natronomonas pharaonis (strain ATCC 35678 / DSM 2160 / CIP 103997 / JCM 8858 / NBRC 14720 / NCIMB 2260 / Gabara) (Halobacterium pharaonis).